We begin with the raw amino-acid sequence, 90 residues long: Cell division protein CrgA (90 aa).

The interval 1–26 (MPKAKVTKNSIAPVSSNPSANRTPVK) is disordered. Over residues 7 to 26 (TKNSIAPVSSNPSANRTPVK) the composition is skewed to polar residues. The next 2 membrane-spanning stretches (helical) occupy residues 38–58 (VIMFAFMLVGLLWLVANYLVG) and 69–89 (AWNYGIGFGLLIIGLLMTMGW).

This sequence belongs to the CrgA family.

Its subcellular location is the cell membrane. In terms of biological role, involved in cell division. This Corynebacterium efficiens (strain DSM 44549 / YS-314 / AJ 12310 / JCM 11189 / NBRC 100395) protein is Cell division protein CrgA.